The following is a 200-amino-acid chain: Snake venom metalloproteinase rhomb-I (200 aa).

A Peptidase M12B domain is found at 4–200 (KYIELVVVAD…RKPQCILNKP (197 aa)). Glu-7 and Asp-91 together coordinate Ca(2+). Intrachain disulfides connect Cys-115–Cys-195, Cys-155–Cys-179, and Cys-157–Cys-162. His-140 contributes to the Zn(2+) binding site. Glu-141 is an active-site residue. The Zn(2+) site is built by His-144 and His-150. Residues Cys-195 and Asn-198 each contribute to the Ca(2+) site.

Monomer. It depends on Zn(2+) as a cofactor. As to expression, expressed by the venom gland.

The protein resides in the secreted. Its function is as follows. Snake venom zinc metalloproteinase that induces hemorrhage. This Lachesis muta rhombeata (Bushmaster) protein is Snake venom metalloproteinase rhomb-I.